Reading from the N-terminus, the 481-residue chain is Protein hedgehog (481 aa).

The N-terminal stretch at 1 to 19 is a signal peptide; it reads MDNQAVSALWSCASATCLS. Positions 20–90 are excised as a propeptide; it reads LDAKRHSIEP…LALNFRHAHS (71 aa). Residues 26 to 56 form a disordered region; that stretch reads SIEPNPDGQASPDVNNNNNNHNKSTTTVDAH. The N-palmitoyl cysteine moiety is linked to residue Cys91. The Ca(2+) site is built by Glu155, Glu156, Asp161, Thr191, Glu192, Asp195, and Asp197. The Cholesterol glycine ester moiety is linked to residue Gly264.

Belongs to the hedgehog family. Interacts with shf. The C-terminal part of the hedgehog protein precursor displays an autoproteolysis activity that results in the cleavage of the full-length protein into two parts (N-product and C-product). In addition, the C-terminal part displays a cholesterol transferase activity that results by the covalent attachment of a cholesterol moiety to the C-terminal of the newly generated N-product. The N-product is the active species in both local and long-range signaling, whereas the C-product has no signaling activity. In terms of processing, cholesterylation is required for N-product targeting to lipid rafts and multimerization. Post-translationally, N-palmitoylation by Rasp of the hedgehog N-product, within the secretory pathway, is required for the embryonic and larval patterning activities of the hedgehog signal.

It is found in the nucleus. Its subcellular location is the cytoplasm. It localises to the cell membrane. It carries out the reaction glycyl-L-cysteinyl-[protein] + cholesterol + H(+) = [protein]-C-terminal glycyl cholesterol ester + N-terminal L-cysteinyl-[protein]. The C-terminal part of the hedgehog protein precursor displays an autoproteolysis activity that results in the cleavage of the full-length protein into two parts (N-product and C-product). In addition, the C-terminal part displays a cholesterol transferase activity that results by the covalent attachment of a cholesterol moiety to the C-terminal of the newly generated N-product. Once cleaved, the C-product has no signaling activity and diffuses from the cell. In terms of biological role, the dually lipidated hedgehog protein N-product is a morphogen which is essential for a variety of patterning events during development. Establishes the anterior-posterior axis of the embryonic segments and patterns the larval imaginal disks. Binds to the patched (ptc) receptor, which functions in association with smoothened (smo), to activate the transcription of target genes wingless (wg), decapentaplegic (dpp) and ptc. In the absence of hh, ptc represses the constitutive signaling activity of smo through fused (fu). Essential component of a signaling pathway which regulates the Duox-dependent gut immune response to bacterial uracil; required to activate Cad99C-dependent endosome formation, norpA-dependent Ca2+ mobilization and p38 MAPK, which are essential steps in the Duox-dependent production of reactive oxygen species (ROS) in response to intestinal bacterial infection. During photoreceptor differentiation, it up-regulates transcription of Ubr3, which in turn promotes the hh-signaling pathway by mediating the ubiquitination and degradation of cos. The sequence is that of Protein hedgehog from Drosophila hydei (Fruit fly).